A 350-amino-acid chain; its full sequence is MSAASPLRWQLIEHAPLRALNTFHVDATARWLLNIHAPEALPDALAAPQIAGQPLLVLGSGSNVLLAGDPPGCVLCFDNRDITIIAHHADHAIVRAGAGVNWHGLVMYSLQQGLSGLENLALIPGTVGACPIQNIGAYGAQVSDFIHVVEAYDRGTEQFVRLNPAECAFGYRDSVFKQQPDRYLIVAVEFNLPLLHELRLDYAGIRDELARMGAELAGAADVAQAVINIRQRKLPDPEVLGNAGSFFKNPLLPSEQIAALQASFADMPVFPGEQPGQGKLSAAWLIEQCGWKGKREGDAGISEAHALVLVNHGSASGAQLLAFARQVAESVRERYSVILEPEPRVIGAHW.

Positions 24–195 (HVDATARWLL…VAVEFNLPLL (172 aa)) constitute an FAD-binding PCMH-type domain. Residue Arg172 is part of the active site. Catalysis depends on Ser245, which acts as the Proton donor. Glu342 is an active-site residue.

It belongs to the MurB family. Requires FAD as cofactor.

Its subcellular location is the cytoplasm. The enzyme catalyses UDP-N-acetyl-alpha-D-muramate + NADP(+) = UDP-N-acetyl-3-O-(1-carboxyvinyl)-alpha-D-glucosamine + NADPH + H(+). It functions in the pathway cell wall biogenesis; peptidoglycan biosynthesis. Cell wall formation. The chain is UDP-N-acetylenolpyruvoylglucosamine reductase from Xanthomonas campestris pv. campestris (strain 8004).